We begin with the raw amino-acid sequence, 765 residues long: Cullin-5 (765 aa).

One can recognise a Cullin neddylation domain in the interval 696–757 (RELRVQEGIV…NKYMERRADD (62 aa)). Residue lysine 709 forms a Glycyl lysine isopeptide (Lys-Gly) (interchain with G-Cter in NEDD8) linkage.

Belongs to the cullin family. In terms of assembly, interacts with rbx-1 and rbx-2. Post-translationally, neddylated; which enhances the ubiquitination activity of SCF-like complex.

It participates in protein modification; protein ubiquitination. In terms of biological role, probable core component of cullin-based SCF-like E3 ubiquitin-protein ligase complexes which mediate the ubiquitination and subsequent proteasomal degradation of target proteins. In association with rbx-2 seems to be involved in meiotic cell cycle progression in the germline. Required for phosphorylation of the MAP kinase MPK-1 in the germline. This Caenorhabditis elegans protein is Cullin-5 (cul-5).